The chain runs to 91 residues: Elongation factor 1-beta (91 aa).

This sequence belongs to the EF-1-beta/EF-1-delta family.

Its function is as follows. Promotes the exchange of GDP for GTP in EF-1-alpha/GDP, thus allowing the regeneration of EF-1-alpha/GTP that could then be used to form the ternary complex EF-1-alpha/GTP/AAtRNA. In Thermococcus kodakarensis (strain ATCC BAA-918 / JCM 12380 / KOD1) (Pyrococcus kodakaraensis (strain KOD1)), this protein is Elongation factor 1-beta.